We begin with the raw amino-acid sequence, 1159 residues long: Protocadherin-17 (1159 aa).

The N-terminal stretch at 1 to 17 is a signal peptide; the sequence is MYLSICCCFLLWAPALT. Cadherin domains lie at 18 to 132, 133 to 243, 244 to 351, 353 to 472, 473 to 583, and 589 to 695; these read LKNL…APSF, SSDQ…SPVF, EAPS…APSI, FVSV…PPRF, TKGL…APVI, and QNDT…VPRV. Over 18 to 707 the chain is Extracellular; it reads LKNLNYSVPE…EQHHWDMSLP (690 aa). Asparagine 22 is a glycosylation site (N-linked (GlcNAc...) asparagine). The Cell attachment site motif lies at 186–188; sequence RGD. 6 N-linked (GlcNAc...) asparagine glycosylation sites follow: asparagine 266, asparagine 439, asparagine 453, asparagine 504, asparagine 566, and asparagine 590. The helical transmembrane segment at 708 to 728 threads the bilayer; that stretch reads LIVTLSTISIILLAAMITIAV. The Cytoplasmic segment spans residues 729–1159; that stretch reads KCKRENKEIR…RGNDPVAVRK (431 aa). 2 disordered regions span residues 858–909 and 1108–1132; these read NFPA…KGSC and SRDSSEMGAVLEQLDHPNRDLGRES. Polar residues predominate over residues 867-879; sequence GSRQQFVQSSSTF. 2 stretches are compositionally biased toward basic and acidic residues: residues 880–895 and 1120–1132; these read KDPERASLRDSGHGDS and QLDHPNRDLGRES.

The protein localises to the cell membrane. Its function is as follows. Potential calcium-dependent cell-adhesion protein. This is Protocadherin-17 (PCDH17) from Homo sapiens (Human).